We begin with the raw amino-acid sequence, 856 residues long: MRVKEKYQHLRRWGWRWGTMLLGMLMICSATEKLWVTVYYGVPVWKEATTTLFCASDAKAYDTEVHNVWATHACVPTDPNPQEVVLVNVTENFNMWKNDMVEQMHEDIISLWDQSLKPCVKLTPLCVSLKCTDLKNDTNTNSSSGGMIMEKGEIKNCSFNISTSIRGKVQKEYAFFYKHDIIPIDNDTTSYTLTSCNTSVITQACPKVSFEPIPIHYCAPAGFAILKCNNKTFNGTGPCTNVSTVQCTHGIKPVVSTQLLLNGSLAEEEVVIRSANLTDNVKTIIVQLNQSVEINCTRPNNNTRKRIRIQRGPGRTFVTIGKIGNMRQAHCNISRAKWNNTLKQIASKLREQYGNNKTIIFKQSSGGDLEIVTHSFNCGGEFFYCNSTQLFNSTWFNSTWSTEGSNNTEGSDTITLPCRIKQIINMWQEVGKAMYAPPISGQIRCSSNITGLLLTRDGGNNNNGSEIFRPGGGDMRDNWRSELYKYKVVKIEPLGVAPTKAKRRVVQREKRAVGIGALFLGFLGAAGSTMGAASMTLTVQARQLLSGIVQQQNNLLRAIEAQQHLLQLTVWGIKQLQARILAVERYLKDQQLLGIWGCSGKLICTTAVPWNASWSNKSLEQIWNHTTWMEWDREINNYTSLIHSLIEESQNQQEKNEQELLELDKWASLWNWFNITNWLWYIKIFIMIVGGLVGLRIVFAVLSIVNRVRQGHSPLSFQTHLPTPGGPDRPEGIEEEGGERDRDRSIRLVNGSLALIWDDLRSLCLFSYHRLRDLLLIVTRIVELLGRRGWEALKYWWNLLQYWSQELKNSAVSLLNATAIAVAEGTDRVIEVVQGACRAIRHIPRRIRQGLERILL.

Residues 1–32 form the signal peptide; that stretch reads MRVKEKYQHLRRWGWRWGTMLLGMLMICSATE. Topologically, residues 33-684 are extracellular; sequence KLWVTVYYGV…ITNWLWYIKI (652 aa). A disulfide bridge connects residues Cys-54 and Cys-74. Residues Asn-88, Asn-136, Asn-141, Asn-156, Asn-160, Asn-186, Asn-197, Asn-230, Asn-234, Asn-241, Asn-262, Asn-276, Asn-289, Asn-295, Asn-301, Asn-332, Asn-339, and Asn-356 are each glycosylated (N-linked (GlcNAc...) asparagine; by host). Cystine bridges form between Cys-119–Cys-205, Cys-126–Cys-196, Cys-131–Cys-157, Cys-218–Cys-247, and Cys-228–Cys-239. The V1 stretch occupies residues 131–156; sequence CTDLKNDTNTNSSSGGMIMEKGEIKN. Residues 157-196 are V2; it reads CSFNISTSIRGKVQKEYAFFYKHDIIPIDNDTTSYTLTSC. A V3 region spans residues 296 to 330; the sequence is CTRPNNNTRKRIRIQRGPGRTFVTIGKIGNMRQAH. An intrachain disulfide couples Cys-296 to Cys-331. The segment at 364–374 is CD4-binding loop; the sequence is SSGGDLEIVTH. Intrachain disulfides connect Cys-378–Cys-445 and Cys-385–Cys-418. The interval 385 to 418 is V4; sequence CNSTQLFNSTWFNSTWSTEGSNNTEGSDTITLPC. Asn-386, Asn-392, Asn-397, Asn-406, Asn-448, and Asn-463 each carry an N-linked (GlcNAc...) asparagine; by host glycan. 2 V5 regions span residues 461-471 and 463-471; these read NNNGSEIFRPG and NGSEIFRPG. Residues 512 to 532 are fusion peptide; sequence AVGIGALFLGFLGAAGSTMGA. Residues 574–592 form an immunosuppression region; sequence KQLQARILAVERYLKDQQL. Cys-598 and Cys-604 are oxidised to a cystine. Asn-611, Asn-616, Asn-624, Asn-637, and Asn-674 each carry an N-linked (GlcNAc...) asparagine; by host glycan. The stretch at 633 to 667 forms a coiled coil; it reads REINNYTSLIHSLIEESQNQQEKNEQELLELDKWA. The MPER; binding to GalCer stretch occupies residues 662–683; it reads ELDKWASLWNWFNITNWLWYIK. The helical transmembrane segment at 685-705 threads the bilayer; the sequence is FIMIVGGLVGLRIVFAVLSIV. At 706–856 the chain is on the cytoplasmic side; sequence NRVRQGHSPL…IRQGLERILL (151 aa). Residues 715 to 742 are disordered; that stretch reads LSFQTHLPTPGGPDRPEGIEEEGGERDR. S-palmitoyl cysteine; by host attachment occurs at residues Cys-764 and Cys-837. A Di-leucine internalization motif motif is present at residues 855–856; it reads LL.

The protein belongs to the HIV-1 env protein family. In terms of assembly, the mature envelope protein (Env) consists of a homotrimer of non-covalently associated gp120-gp41 heterodimers. The resulting complex protrudes from the virus surface as a spike. There seems to be as few as 10 spikes on the average virion. Interacts with host CD4, CCR5 and CXCR4. Gp120 also interacts with the C-type lectins CD209/DC-SIGN and CLEC4M/DC-SIGNR (collectively referred to as DC-SIGN(R)). Gp120 and gp41 interact with GalCer. Gp120 interacts with host ITGA4/ITGB7 complex; on CD4+ T-cells, this interaction results in rapid activation of integrin ITGAL/LFA-1, which facilitates efficient cell-to-cell spreading of HIV-1. Gp120 interacts with cell-associated heparan sulfate; this interaction increases virus infectivity on permissive cells and may be involved in infection of CD4- cells. As to quaternary structure, the mature envelope protein (Env) consists of a homotrimer of non-covalently associated gp120-gp41 heterodimers. The resulting complex protrudes from the virus surface as a spike. There seems to be as few as 10 spikes on the average virion. Highly glycosylated by host. The high number of glycan on the protein is reffered to as 'glycan shield' because it contributes to hide protein sequence from adaptive immune system. In terms of processing, palmitoylation of the transmembrane protein and of Env polyprotein (prior to its proteolytic cleavage) is essential for their association with host cell membrane lipid rafts. Palmitoylation is therefore required for envelope trafficking to classical lipid rafts, but not for viral replication. Post-translationally, specific enzymatic cleavages in vivo yield mature proteins. Envelope glycoproteins are synthesized as an inactive precursor that is heavily N-glycosylated and processed likely by host cell furin in the Golgi to yield the mature SU and TM proteins. The cleavage site between SU and TM requires the minimal sequence [KR]-X-[KR]-R. About 2 of the 9 disulfide bonds of gp41 are reduced by P4HB/PDI, following binding to CD4 receptor.

Its subcellular location is the virion membrane. The protein localises to the host cell membrane. It is found in the host endosome membrane. Its function is as follows. Oligomerizes in the host endoplasmic reticulum into predominantly trimers. In a second time, gp160 transits in the host Golgi, where glycosylation is completed. The precursor is then proteolytically cleaved in the trans-Golgi and thereby activated by cellular furin or furin-like proteases to produce gp120 and gp41. Functionally, attaches the virus to the host lymphoid cell by binding to the primary receptor CD4. This interaction induces a structural rearrangement creating a high affinity binding site for a chemokine coreceptor like CXCR4 and/or CCR5. Acts as a ligand for CD209/DC-SIGN and CLEC4M/DC-SIGNR, which are respectively found on dendritic cells (DCs), and on endothelial cells of liver sinusoids and lymph node sinuses. These interactions allow capture of viral particles at mucosal surfaces by these cells and subsequent transmission to permissive cells. HIV subverts the migration properties of dendritic cells to gain access to CD4+ T-cells in lymph nodes. Virus transmission to permissive T-cells occurs either in trans (without DCs infection, through viral capture and transmission), or in cis (following DCs productive infection, through the usual CD4-gp120 interaction), thereby inducing a robust infection. In trans infection, bound virions remain infectious over days and it is proposed that they are not degraded, but protected in non-lysosomal acidic organelles within the DCs close to the cell membrane thus contributing to the viral infectious potential during DCs' migration from the periphery to the lymphoid tissues. On arrival at lymphoid tissues, intact virions recycle back to DCs' cell surface allowing virus transmission to CD4+ T-cells. Acts as a class I viral fusion protein. Under the current model, the protein has at least 3 conformational states: pre-fusion native state, pre-hairpin intermediate state, and post-fusion hairpin state. During fusion of viral and target intracellular membranes, the coiled coil regions (heptad repeats) assume a trimer-of-hairpins structure, positioning the fusion peptide in close proximity to the C-terminal region of the ectodomain. The formation of this structure appears to drive apposition and subsequent fusion of viral and target cell membranes. Complete fusion occurs in host cell endosomes and is dynamin-dependent, however some lipid transfer might occur at the plasma membrane. The virus undergoes clathrin-dependent internalization long before endosomal fusion, thus minimizing the surface exposure of conserved viral epitopes during fusion and reducing the efficacy of inhibitors targeting these epitopes. Membranes fusion leads to delivery of the nucleocapsid into the cytoplasm. The chain is Envelope glycoprotein gp160 from Homo sapiens (Human).